A 390-amino-acid chain; its full sequence is Chalcone synthase (390 aa).

The active site involves Cys164.

This sequence belongs to the thiolase-like superfamily. Chalcone/stilbene synthases family.

The catalysed reaction is (E)-4-coumaroyl-CoA + 3 malonyl-CoA + 3 H(+) = 2',4,4',6'-tetrahydroxychalcone + 3 CO2 + 4 CoA. The protein operates within secondary metabolite biosynthesis; flavonoid biosynthesis. Functionally, the primary product of this enzyme is 4,2',4',6'-tetrahydroxychalcone (also termed naringenin-chalcone or chalcone) which can under specific conditions spontaneously isomerize into naringenin. In Onobrychis viciifolia (Common sainfoin), this protein is Chalcone synthase (CHS).